The following is a 122-amino-acid chain: Large ribosomal subunit protein uL14c (122 aa).

Belongs to the universal ribosomal protein uL14 family. As to quaternary structure, part of the 50S ribosomal subunit.

It is found in the plastid. Its subcellular location is the chloroplast. Its function is as follows. Binds to 23S rRNA. This Guizotia abyssinica (Niger) protein is Large ribosomal subunit protein uL14c.